A 701-amino-acid polypeptide reads, in one-letter code: Polyribonucleotide nucleotidyltransferase (701 aa).

Positions 487 and 493 each coordinate Mg(2+). One can recognise a KH domain in the interval 554–613; the sequence is PTMLQMKIDSDKIRDVIGKGGATIRAICEETKASIDIEDDGSVKIYGETKEAAEAAKQRV. The S1 motif domain maps to 623–691; that stretch reads GKIYVGKVER…NRGRIKLSIK (69 aa).

The protein belongs to the polyribonucleotide nucleotidyltransferase family. In terms of assembly, component of the RNA degradosome, which is a multiprotein complex involved in RNA processing and mRNA degradation. Mg(2+) serves as cofactor.

The protein resides in the cytoplasm. The enzyme catalyses RNA(n+1) + phosphate = RNA(n) + a ribonucleoside 5'-diphosphate. Involved in mRNA degradation. Catalyzes the phosphorolysis of single-stranded polyribonucleotides processively in the 3'- to 5'-direction. The chain is Polyribonucleotide nucleotidyltransferase from Pseudomonas paraeruginosa (strain DSM 24068 / PA7) (Pseudomonas aeruginosa (strain PA7)).